Here is a 1369-residue protein sequence, read N- to C-terminus: Serine/threonine-protein kinase SIK3 (1369 aa).

Positions 26–55 are disordered; that stretch reads LLPPPAAGPPAAPAAVPPAAVPARPTAPAS. Pro residues predominate over residues 27 to 45; the sequence is LPPPAAGPPAAPAAVPPAA. The span at 46 to 55 shows a compositional bias: low complexity; it reads VPARPTAPAS. Residues 66–317 enclose the Protein kinase domain; that stretch reads YEIDRTIGKG…MEQICRHKWM (252 aa). Residue threonine 71 is modified to Phosphothreonine. Residues 72-80 and lysine 95 each bind ATP; that span reads IGKGNFAVV. Aspartate 188 acts as the Proton acceptor in catalysis. Position 221 is a phosphothreonine (threonine 221). The region spanning 344–384 is the UBA domain; sequence PLNDDVLLAMEDMGLDKERTLQSLRSDAYDHYSAIYSLLCD. Residue threonine 469 is modified to Phosphothreonine. Phosphoserine occurs at positions 551, 591, 592, 674, and 695. The tract at residues 775-821 is disordered; that stretch reads IQPSSPPPNHPSNHLFRQPSNSPPPVSSAMITSHGATSPSQFQGLPS. Polar residues predominate over residues 803–818; that stretch reads AMITSHGATSPSQFQG. Serine 914 carries the post-translational modification Phosphoserine. The disordered stretch occupies residues 942–993; it reads LFSDQSRGSPSSYSPSTGVGFPPTQALKVPPLDQFPTFPPSAQQQPPHYTTS. Low complexity predominate over residues 944–957; it reads SDQSRGSPSSYSPS. Polar residues predominate over residues 981–993; the sequence is PSAQQQPPHYTTS. Serine 1026 bears the Phosphoserine mark. At arginine 1034 the chain carries Omega-N-methylarginine. A disordered region spans residues 1314–1338; the sequence is DEEDEECGVSLGHEHPGLGDGSQHL.

This sequence belongs to the protein kinase superfamily. CAMK Ser/Thr protein kinase family. SNF1 subfamily. As to quaternary structure, binds to and is activated by YWHAZ when phosphorylated on Thr-221. Interacts with 14-3-3 proteins. Interacts with HDAC4; this interaction leads to HDAC4 retention in the cytoplasm. Interacts with DEPTOR, MLST8/GbetaL, RICTOR and RPTOR. The cofactor is Mg(2+). Phosphorylated at Thr-221 by STK11/LKB1 in complex with STE20-related adapter-alpha (STRADA) pseudo kinase and CAB39. In terms of tissue distribution, expressed in hypertrophic chondrocytes in the growth plate.

Its subcellular location is the cytoplasm. The catalysed reaction is L-seryl-[protein] + ATP = O-phospho-L-seryl-[protein] + ADP + H(+). It carries out the reaction L-threonyl-[protein] + ATP = O-phospho-L-threonyl-[protein] + ADP + H(+). Its activity is regulated as follows. Activated by phosphorylation on Thr-221. In terms of biological role, positive regulator of mTOR signaling that functions by triggering the degradation of DEPTOR, an mTOR inhibitor. Required for chondrocyte hypertrophy during skeletogenesis. Negatively regulates cAMP signaling pathway possibly by acting on CRTC2/TORC2 and CRTC3/TORC3. Prevents HDAC4 translocation to the nucleus. The polypeptide is Serine/threonine-protein kinase SIK3 (Sik3) (Mus musculus (Mouse)).